We begin with the raw amino-acid sequence, 216 residues long: MGKDNKKQTMLDQAQPRLQVEGLAGRRGERLLFKNMNFTVDMGEVLEVSGHNGSGKTTLLRLLCGLLLPEEGTLQWRGQPINKIRPLYHSELSYVGHTDAIKGELTAHENLMIAGALNGGGIDPEQALERVGLTTIRELPGRFLSAGQRRRLALARLLVNRAWLWLLDEPFTALDKVAIRTIATLLEEHAAAGGIAIFTSHHAINIAHARTLEISA.

Residues 18 to 216 enclose the ABC transporter domain; that stretch reads LQVEGLAGRR…AHARTLEISA (199 aa). 50–57 is a binding site for ATP; sequence GHNGSGKT.

This sequence belongs to the ABC transporter superfamily. CcmA exporter (TC 3.A.1.107) family. As to quaternary structure, the complex is composed of two ATP-binding proteins (CcmA) and two transmembrane proteins (CcmB).

The protein resides in the cell inner membrane. The enzyme catalyses heme b(in) + ATP + H2O = heme b(out) + ADP + phosphate + H(+). Functionally, part of the ABC transporter complex CcmAB involved in the biogenesis of c-type cytochromes; once thought to export heme, this seems not to be the case, but its exact role is uncertain. Responsible for energy coupling to the transport system. The chain is Cytochrome c biogenesis ATP-binding export protein CcmA from Nitrosococcus oceani (strain ATCC 19707 / BCRC 17464 / JCM 30415 / NCIMB 11848 / C-107).